Consider the following 486-residue polypeptide: Siroheme synthase (486 aa).

The segment at 1-204 (MNYLPIFVDL…HQIEQAEALV (204 aa)) is precorrin-2 dehydrogenase /sirohydrochlorin ferrochelatase. NAD(+) is bound by residues 22–23 (HV) and 43–44 (EK). The residue at position 128 (Ser128) is a Phosphoserine. A uroporphyrinogen-III C-methyltransferase region spans residues 216 to 486 (GEVSLVGAGP…NKETHWKQAA (271 aa)). An S-adenosyl-L-methionine-binding site is contributed by Pro225. Residue Asp248 is the Proton acceptor of the active site. The Proton donor role is filled by Lys270. S-adenosyl-L-methionine is bound by residues 301-303 (GGD), Val306, 331-332 (TA), Met383, and Gly412.

This sequence in the N-terminal section; belongs to the precorrin-2 dehydrogenase / sirohydrochlorin ferrochelatase family. It in the C-terminal section; belongs to the precorrin methyltransferase family.

It carries out the reaction uroporphyrinogen III + 2 S-adenosyl-L-methionine = precorrin-2 + 2 S-adenosyl-L-homocysteine + H(+). It catalyses the reaction precorrin-2 + NAD(+) = sirohydrochlorin + NADH + 2 H(+). The enzyme catalyses siroheme + 2 H(+) = sirohydrochlorin + Fe(2+). The protein operates within cofactor biosynthesis; adenosylcobalamin biosynthesis; precorrin-2 from uroporphyrinogen III: step 1/1. It participates in cofactor biosynthesis; adenosylcobalamin biosynthesis; sirohydrochlorin from precorrin-2: step 1/1. It functions in the pathway porphyrin-containing compound metabolism; siroheme biosynthesis; precorrin-2 from uroporphyrinogen III: step 1/1. Its pathway is porphyrin-containing compound metabolism; siroheme biosynthesis; siroheme from sirohydrochlorin: step 1/1. The protein operates within porphyrin-containing compound metabolism; siroheme biosynthesis; sirohydrochlorin from precorrin-2: step 1/1. Functionally, multifunctional enzyme that catalyzes the SAM-dependent methylations of uroporphyrinogen III at position C-2 and C-7 to form precorrin-2 via precorrin-1. Then it catalyzes the NAD-dependent ring dehydrogenation of precorrin-2 to yield sirohydrochlorin. Finally, it catalyzes the ferrochelation of sirohydrochlorin to yield siroheme. The sequence is that of Siroheme synthase from Actinobacillus pleuropneumoniae serotype 7 (strain AP76).